We begin with the raw amino-acid sequence, 510 residues long: Aromatic-L-amino-acid decarboxylase (510 aa).

Residues 1 to 17 show a composition bias toward polar residues; it reads MSHIPISNTIPTKQTDG. Positions 1 to 28 are disordered; it reads MSHIPISNTIPTKQTDGNGKANISPDKL. A substrate-binding site is contributed by threonine 117. Pyridoxal 5'-phosphate is bound by residues alanine 183, serine 184, histidine 227, aspartate 305, and asparagine 334. A substrate-binding site is contributed by histidine 227. Residue histidine 227 is part of the active site. Lysine 337 is subject to N6-(pyridoxal phosphate)lysine. The tract at residues 358–384 is disordered; it reads NAFNVDPLYLKHDMQGSAPDYRHWQIP.

It belongs to the group II decarboxylase family. In terms of assembly, homodimer. Pyridoxal 5'-phosphate is required as a cofactor. In terms of tissue distribution, hypoderm isoform is expressed only in hypodermal epithelium and the CNS isoform only in central nervous system. Expressed in the adult head (at protein level).

The enzyme catalyses L-dopa + H(+) = dopamine + CO2. It catalyses the reaction 5-hydroxy-L-tryptophan + H(+) = serotonin + CO2. Catalyzes the decarboxylation of L-3,4-dihydroxyphenylalanine (L-DOPA) to dopamine and L-5-hydroxytryptophan (5-HTP) to serotonin. Catalyzes the formation of serotonin more efficiently than dopamine. Displays no activity to tyrosine. Variation in the synthesis of bioamines may be a factor contributing to natural variation in life span. The chain is Aromatic-L-amino-acid decarboxylase (Ddc) from Drosophila melanogaster (Fruit fly).